The following is a 579-amino-acid chain: 2-isopropylmalate synthase (579 aa).

Residues 40 to 314 form the Pyruvate carboxyltransferase domain; it reads PRWCAVDLRD…DPMIDFSDID (275 aa). D49, H253, H255, and N289 together coordinate Mg(2+). The interval 456 to 579 is regulatory domain; it reads SDEEQAQWGR…VNRAVRDAQA (124 aa).

This sequence belongs to the alpha-IPM synthase/homocitrate synthase family. LeuA type 2 subfamily. Homodimer. Mg(2+) serves as cofactor.

Its subcellular location is the cytoplasm. It carries out the reaction 3-methyl-2-oxobutanoate + acetyl-CoA + H2O = (2S)-2-isopropylmalate + CoA + H(+). It functions in the pathway amino-acid biosynthesis; L-leucine biosynthesis; L-leucine from 3-methyl-2-oxobutanoate: step 1/4. Functionally, catalyzes the condensation of the acetyl group of acetyl-CoA with 3-methyl-2-oxobutanoate (2-ketoisovalerate) to form 3-carboxy-3-hydroxy-4-methylpentanoate (2-isopropylmalate). This chain is 2-isopropylmalate synthase, found in Paenarthrobacter aurescens (strain TC1).